Consider the following 309-residue polypeptide: Ribonuclease Z (309 aa).

Positions 63, 65, 67, 68, 145, 216, and 274 each coordinate Zn(2+). The active-site Proton acceptor is Asp67.

The protein belongs to the RNase Z family. As to quaternary structure, homodimer. Zn(2+) is required as a cofactor.

It catalyses the reaction Endonucleolytic cleavage of RNA, removing extra 3' nucleotides from tRNA precursor, generating 3' termini of tRNAs. A 3'-hydroxy group is left at the tRNA terminus and a 5'-phosphoryl group is left at the trailer molecule.. Functionally, zinc phosphodiesterase, which displays some tRNA 3'-processing endonuclease activity. Probably involved in tRNA maturation, by removing a 3'-trailer from precursor tRNA. The chain is Ribonuclease Z from Streptococcus uberis (strain ATCC BAA-854 / 0140J).